The primary structure comprises 80 residues: Clavanin-E (80 aa).

A signal peptide spans 1–19; sequence MKTTILILLILGLGINAKS. The propeptide occupies 20–29; it reads LEERKSEEEK. Phe-52 is modified (phenylalanine amide). A propeptide spanning residues 54–80 is cleaved from the precursor; it reads DDQQDNGKFYGYYAEDNGKHWYDTGDQ.

It localises to the secreted. Functionally, has antimicrobial activity. This is Clavanin-E from Styela clava (Sea squirt).